Reading from the N-terminus, the 255-residue chain is Flap endonuclease Xni (255 aa).

Aspartate 105 lines the Mg(2+) pocket. The region spanning 163-253 is the 5'-3' exonuclease domain; sequence QYQMLDFIAL…NLKQFRINPI (91 aa). K(+) contacts are provided by leucine 172, alanine 173, proline 181, isoleucine 183, and isoleucine 186. The tract at residues 185 to 190 is interaction with DNA; the sequence is GIGPKS.

The protein belongs to the Xni family. Mg(2+) serves as cofactor. It depends on K(+) as a cofactor.

Its function is as follows. Has flap endonuclease activity. During DNA replication, flap endonucleases cleave the 5'-overhanging flap structure that is generated by displacement synthesis when DNA polymerase encounters the 5'-end of a downstream Okazaki fragment. This chain is Flap endonuclease Xni, found in Shewanella frigidimarina (strain NCIMB 400).